A 127-amino-acid chain; its full sequence is Small ribosomal subunit protein uS13 (127 aa).

The interval 90 to 127 (RRHRQGLPVRGQRTRTNARTRRGRRVTVAGKKKAPSKK) is disordered. Basic residues predominate over residues 101–127 (QRTRTNARTRRGRRVTVAGKKKAPSKK).

Belongs to the universal ribosomal protein uS13 family. Part of the 30S ribosomal subunit. Forms a loose heterodimer with protein S19. Forms two bridges to the 50S subunit in the 70S ribosome.

Located at the top of the head of the 30S subunit, it contacts several helices of the 16S rRNA. In the 70S ribosome it contacts the 23S rRNA (bridge B1a) and protein L5 of the 50S subunit (bridge B1b), connecting the 2 subunits; these bridges are implicated in subunit movement. Contacts the tRNAs in the A and P-sites. The sequence is that of Small ribosomal subunit protein uS13 from Rippkaea orientalis (strain PCC 8801 / RF-1) (Cyanothece sp. (strain PCC 8801)).